We begin with the raw amino-acid sequence, 949 residues long: Bifunctional glutamine synthetase adenylyltransferase/adenylyl-removing enzyme (949 aa).

An adenylyl removase region spans residues 1-450 (MQNQGNKVLS…HFNATVGGTD (450 aa)). Positions 455–949 (NDHWTALFWN…IEIYNEILAI (495 aa)) are adenylyl transferase.

It belongs to the GlnE family. Mg(2+) serves as cofactor.

It carries out the reaction [glutamine synthetase]-O(4)-(5'-adenylyl)-L-tyrosine + phosphate = [glutamine synthetase]-L-tyrosine + ADP. It catalyses the reaction [glutamine synthetase]-L-tyrosine + ATP = [glutamine synthetase]-O(4)-(5'-adenylyl)-L-tyrosine + diphosphate. Involved in the regulation of glutamine synthetase GlnA, a key enzyme in the process to assimilate ammonia. When cellular nitrogen levels are high, the C-terminal adenylyl transferase (AT) inactivates GlnA by covalent transfer of an adenylyl group from ATP to specific tyrosine residue of GlnA, thus reducing its activity. Conversely, when nitrogen levels are low, the N-terminal adenylyl removase (AR) activates GlnA by removing the adenylyl group by phosphorolysis, increasing its activity. The regulatory region of GlnE binds the signal transduction protein PII (GlnB) which indicates the nitrogen status of the cell. The protein is Bifunctional glutamine synthetase adenylyltransferase/adenylyl-removing enzyme of Shewanella frigidimarina (strain NCIMB 400).